We begin with the raw amino-acid sequence, 222 residues long: Adenylate kinase, chloroplastic (222 aa).

15–20 (ASGKGT) is a binding site for ATP. Positions 35 to 64 (SAGDLLRAEIAAGSENGKRAKEFMEKGQLV) are NMP. AMP is bound by residues Arg41, 62–64 (QLV), 91–94 (GYPR), and Gln98. The LID stretch occupies residues 128–161 (GRRLDPVTGKIYHLKYSPPENEEIASRLTQRFDD). Position 129 (Arg129) interacts with ATP. Position 158 (Arg158) interacts with AMP. Ala195 provides a ligand contact to ATP.

Monomer.

It localises to the plastid. The protein localises to the chloroplast. The catalysed reaction is AMP + ATP = 2 ADP. In terms of biological role, catalyzes the reversible transfer of the terminal phosphate group between ATP and AMP. Plays an important role in cellular energy homeostasis and in adenine nucleotide metabolism. The maize enzyme also works with CMP, albeit with 10% of the activity with AMP. The polypeptide is Adenylate kinase, chloroplastic (ADK1) (Zea mays (Maize)).